A 24-amino-acid chain; its full sequence is Humanin-like 10 (24 aa).

The protein belongs to the humanin family. As to expression, expressed in mature brain, thyroid gland and testis.

Its subcellular location is the secreted. The protein localises to the cytoplasm. In terms of biological role, plays a role as a neuroprotective and antiapoptotic factor. The protein is Humanin-like 10 of Homo sapiens (Human).